Reading from the N-terminus, the 424-residue chain is Serine--tRNA ligase (424 aa).

Position 230 to 232 (Thr230 to Glu232) interacts with L-serine. ATP is bound at residue Arg261–Glu263. Glu284 lines the L-serine pocket. Glu348–Ser351 contacts ATP. Ser384 contributes to the L-serine binding site.

This sequence belongs to the class-II aminoacyl-tRNA synthetase family. Type-1 seryl-tRNA synthetase subfamily. As to quaternary structure, homodimer. The tRNA molecule binds across the dimer.

It localises to the cytoplasm. The catalysed reaction is tRNA(Ser) + L-serine + ATP = L-seryl-tRNA(Ser) + AMP + diphosphate + H(+). The enzyme catalyses tRNA(Sec) + L-serine + ATP = L-seryl-tRNA(Sec) + AMP + diphosphate + H(+). Its pathway is aminoacyl-tRNA biosynthesis; selenocysteinyl-tRNA(Sec) biosynthesis; L-seryl-tRNA(Sec) from L-serine and tRNA(Sec): step 1/1. Its function is as follows. Catalyzes the attachment of serine to tRNA(Ser). Is also able to aminoacylate tRNA(Sec) with serine, to form the misacylated tRNA L-seryl-tRNA(Sec), which will be further converted into selenocysteinyl-tRNA(Sec). The polypeptide is Serine--tRNA ligase (Streptococcus pneumoniae serotype 2 (strain D39 / NCTC 7466)).